Reading from the N-terminus, the 343-residue chain is Anthranilate phosphoribosyltransferase (343 aa).

Residues G77, 80-81 (GD), T85, 87-90 (NVST), 105-113 (KHGNRSSSG), and S117 contribute to the 5-phospho-alpha-D-ribose 1-diphosphate site. G77 contributes to the anthranilate binding site. Mg(2+) is bound at residue S89. N108 lines the anthranilate pocket. R163 is an anthranilate binding site. Residues D222 and E223 each contribute to the Mg(2+) site.

This sequence belongs to the anthranilate phosphoribosyltransferase family. As to quaternary structure, homodimer. The cofactor is Mg(2+).

It carries out the reaction N-(5-phospho-beta-D-ribosyl)anthranilate + diphosphate = 5-phospho-alpha-D-ribose 1-diphosphate + anthranilate. The protein operates within amino-acid biosynthesis; L-tryptophan biosynthesis; L-tryptophan from chorismate: step 2/5. Catalyzes the transfer of the phosphoribosyl group of 5-phosphorylribose-1-pyrophosphate (PRPP) to anthranilate to yield N-(5'-phosphoribosyl)-anthranilate (PRA). The protein is Anthranilate phosphoribosyltransferase of Cenarchaeum symbiosum (strain A).